The following is a 285-amino-acid chain: Hydroxyacylglutathione hydrolase, mitochondrial (285 aa).

A mitochondrion-targeting transit peptide spans 1–10 (MKFLLQQIRN). 7 residues coordinate Zn(2+): H69, H71, D73, H74, H131, D154, and H198.

The cofactor is Zn(2+).

Its subcellular location is the mitochondrion matrix. It catalyses the reaction an S-(2-hydroxyacyl)glutathione + H2O = a 2-hydroxy carboxylate + glutathione + H(+). The enzyme catalyses (R)-S-lactoylglutathione + H2O = (R)-lactate + glutathione + H(+). It participates in secondary metabolite metabolism; methylglyoxal degradation; (R)-lactate from methylglyoxal: step 2/2. With respect to regulation, inhibited by various thiol compounds such as glutathione and coenzyme A. In terms of biological role, thiolesterase that catalyzes the hydrolysis of S-D-lactoylglutathione to form glutathione and D-lactic acid. Involved in the metabolism of methylglyoxal, a toxic compound for yeast proliferation, by converting methylglyoxal to lactate via S-D-lactoylglutathione by sequential enzyme reactions catalyzed by glyoxalase I and glyoxalase II. This is Hydroxyacylglutathione hydrolase, mitochondrial from Saccharomyces cerevisiae (strain ATCC 204508 / S288c) (Baker's yeast).